A 101-amino-acid chain; its full sequence is Apolipoprotein C-II (101 aa).

The first 22 residues, 1–22 (MGTRCLLVLLLVLLVLKCEVQG), serve as a signal peptide directing secretion. Residues 23–28 (DDMARQ) constitute a propeptide, removed in mature form. Positions 66–74 (AMDEKIRDM) are lipid binding. The tract at residues 78–101 (STAAVRIYTGILTDQILSMLTGDP) is lipoprotein lipase cofactor.

The protein belongs to the apolipoprotein C2 family. Proapolipoprotein C-II is synthesized as a sialic acid containing glycoprotein which is subsequently desialylated prior to its proteolytic processing. Post-translationally, proapolipoprotein C-II, the major form found in plasma undergoes proteolytic cleavage of its N-terminal hexapeptide to generate the mature form apolipoprotein C-II, which occurs as the minor form in plasma.

Its subcellular location is the secreted. Functionally, component of chylomicrons, very low-density lipoproteins (VLDL), low-density lipoproteins (LDL), and high-density lipoproteins (HDL) in plasma. Plays an important role in lipoprotein metabolism as an activator of lipoprotein lipase, the enzyme which hydrolyzes the triacylglycerols on chylomicrons and VLDL. The chain is Apolipoprotein C-II (APOC2) from Panthera tigris altaica (Siberian tiger).